The primary structure comprises 1056 residues: Kinesin-like protein KIF11 (1056 aa).

Residues Asn-18–Ile-359 form the Kinesin motor domain. ATP is bound at residue Gly-105 to Thr-112. Lys-146 is subject to N6-acetyllysine. Coiled-coil stretches lie at residues Glu-364 to Tyr-480 and Leu-736 to Asn-763. The residue at position 458 (Thr-458) is a Phosphothreonine. Residue Lys-477 forms a Glycyl lysine isopeptide (Lys-Gly) (interchain with G-Cter in SUMO2) linkage. Thr-925 is subject to Phosphothreonine. Thr-926 is modified (phosphothreonine; by CDK1). Ser-1033 carries the phosphoserine; by NEK6 modification. Residue Lys-1034 forms a Glycyl lysine isopeptide (Lys-Gly) (interchain with G-Cter in ubiquitin) linkage.

The protein belongs to the TRAFAC class myosin-kinesin ATPase superfamily. Kinesin family. BimC subfamily. Interacts with the thyroid hormone receptor in the presence of thyroid hormone. Component of a large chromatin remodeling complex, at least composed of MYSM1, PCAF, RBM10 and KIF11/TRIP5. Interacts (via C-terminus) with the kinase NEK6 in both interphase and mitosis. Interacts with RARRES1 and AGBL2. Interacts with TPX2. Post-translationally, phosphorylated exclusively on serine during S phase, but on both serine and Thr-926 during mitosis, so controlling the association of KIF11 with the spindle apparatus (probably during early prophase). A subset of this protein primarily localized at the spindle pole is phosphorylated by NEK6 during mitosis; phosphorylation is required for mitotic function. In terms of processing, ubiquitinated at Lys-1034 by UHRF1 via 'Lys-63'-linked ubiquitin chains, leading to interaction with spindle assembly factor TPX2, thereby ensuring accurate distribution to the spindles during metaphase.

It localises to the cytoplasm. Its subcellular location is the cytoskeleton. The protein localises to the spindle pole. In terms of biological role, motor protein required for establishing a bipolar spindle and thus contributing to chromosome congression during mitosis. Required in non-mitotic cells for transport of secretory proteins from the Golgi complex to the cell surface. The polypeptide is Kinesin-like protein KIF11 (KIF11) (Homo sapiens (Human)).